A 224-amino-acid polypeptide reads, in one-letter code: MSHTEVKLKVPFGNKLLDAVCLVPNKSLTYGVILTHGASGDMNLPHLTSLASHLASHGFFCLRFTCKGLNIVHRIKAYKSVLNYLKTSEYKLAGVFLGGRSMGSRAAASVLCHIEPDDADDFVRGLICISYPLHHPKQQHKLRDEDLFRIKDPVLFVSGSADEMCEKNLLEKVAQKMQAPHKIHWIEKANHSMAVKGRSTNDVFKEINTQILFWIQEITETDKK.

The protein is Testis-expressed protein 30 (TEX30) of Bos taurus (Bovine).